Here is a 395-residue protein sequence, read N- to C-terminus: S-adenosylmethionine synthase (395 aa).

Residue histidine 14 participates in ATP binding. Mg(2+) is bound at residue aspartate 16. Residue glutamate 42 coordinates K(+). 2 residues coordinate L-methionine: glutamate 55 and glutamine 98. The segment at 98-108 is flexible loop; the sequence is QSPDIAMGVDK. ATP-binding positions include 175 to 177, 242 to 243, aspartate 251, 257 to 258, alanine 274, and lysine 278; these read DGK, RF, and RK. Aspartate 251 lines the L-methionine pocket. An L-methionine-binding site is contributed by lysine 282.

The protein belongs to the AdoMet synthase family. As to quaternary structure, homotetramer; dimer of dimers. The cofactor is Mg(2+). K(+) serves as cofactor.

It is found in the cytoplasm. The catalysed reaction is L-methionine + ATP + H2O = S-adenosyl-L-methionine + phosphate + diphosphate. The protein operates within amino-acid biosynthesis; S-adenosyl-L-methionine biosynthesis; S-adenosyl-L-methionine from L-methionine: step 1/1. Catalyzes the formation of S-adenosylmethionine (AdoMet) from methionine and ATP. The overall synthetic reaction is composed of two sequential steps, AdoMet formation and the subsequent tripolyphosphate hydrolysis which occurs prior to release of AdoMet from the enzyme. The polypeptide is S-adenosylmethionine synthase (Thermosipho melanesiensis (strain DSM 12029 / CIP 104789 / BI429)).